Here is a 386-residue protein sequence, read N- to C-terminus: Ferrochelatase (386 aa).

Residues His196 and Glu277 each coordinate Fe cation.

It belongs to the ferrochelatase family.

It localises to the cytoplasm. It carries out the reaction heme b + 2 H(+) = protoporphyrin IX + Fe(2+). Its pathway is porphyrin-containing compound metabolism; protoheme biosynthesis; protoheme from protoporphyrin-IX: step 1/1. Catalyzes the ferrous insertion into protoporphyrin IX. In Picosynechococcus sp. (strain ATCC 27264 / PCC 7002 / PR-6) (Agmenellum quadruplicatum), this protein is Ferrochelatase.